A 775-amino-acid chain; its full sequence is Meiotic driver SPOK2 (775 aa).

Residues 4–69 (KDRIAQLLRE…RCERERLQLE (66 aa)) adopt a coiled-coil conformation. Disordered stretches follow at residues 18-51 (KAREEEAKARAEEAKARAEEAKARAEEAKAREEE), 211-249 (QKDDGSSGADDNTSDGSLERRQQAGPNKRPTSKRKYICS), 442-525 (LSSA…AMAD), and 734-761 (PPPKPRAVSRLSKPKRKRGDSEADAQLF). Residues 444–457 (SAPSSQNTDISEYT) show a composition bias toward polar residues.

It localises to the cytoplasm. Its subcellular location is the nucleus. Functionally, promotes unequal transmission of alleles from the parental zygote to progeny spores by acting as poison/antidote system, leading to poisoning of progeny that do not inherit the allele. May possess DNA nuclease activity that leads to spore killing, and a kinase activity that confers resistance to the nuclease activity. The protein is Meiotic driver SPOK2 of Podospora anserina (strain S / ATCC MYA-4624 / DSM 980 / FGSC 10383) (Pleurage anserina).